A 533-amino-acid chain; its full sequence is Tyrosine/DOPA decarboxylase 3 (533 aa).

K319 is modified (N6-(pyridoxal phosphate)lysine).

This sequence belongs to the group II decarboxylase family. As to quaternary structure, homodimer. It depends on pyridoxal 5'-phosphate as a cofactor. As to expression, roots.

It catalyses the reaction L-tyrosine + H(+) = tyramine + CO2. The enzyme catalyses L-dopa + H(+) = dopamine + CO2. The catalysed reaction is 5-hydroxy-L-tryptophan + H(+) = serotonin + CO2. Functionally, marginally higher substrate specificity for L-DOPA over L-tyrosine. The sequence is that of Tyrosine/DOPA decarboxylase 3 (TYDC3) from Papaver somniferum (Opium poppy).